A 568-amino-acid chain; its full sequence is Putative ABC transporter ATP-binding protein EF_2153 (568 aa).

ABC transporter domains follow at residues 6–247 and 301–535; these read ITFN…GIRE and LRLE…ASLK. ATP contacts are provided by residues 40–47 and 335–342; these read GPSGSGKS and GKNGAGKS.

The protein belongs to the ABC transporter superfamily.

It localises to the cell membrane. Functionally, probably part of an ABC transporter complex. Responsible for energy coupling to the transport system. This is Putative ABC transporter ATP-binding protein EF_2153 from Enterococcus faecalis (strain ATCC 700802 / V583).